We begin with the raw amino-acid sequence, 147 residues long: Large ribosomal subunit protein uL15 (147 aa).

A disordered region spans residues 1–62 (MDLNTLKPAL…GQMPLQRRLP (62 aa)). Residues 30–39 (TATKGHKGQK) are compositionally biased toward basic residues.

The protein belongs to the universal ribosomal protein uL15 family. Part of the 50S ribosomal subunit.

In terms of biological role, binds to the 23S rRNA. The sequence is that of Large ribosomal subunit protein uL15 from Pelobacter propionicus (strain DSM 2379 / NBRC 103807 / OttBd1).